The primary structure comprises 877 residues: Dystroglycan 1 (877 aa).

A signal peptide spans 1-29 (MRMSAGLSLLIPLWGRTFLLLLSVAVTQS). Residues 30 to 408 (RWPSEPSDAV…GHIRPTMTIP (379 aa)) form a required for laminin recognition region. Residues 49–71 (SMHSVLSDLHEAVPTVVGIPDGT) are O-glycosylated at one site. N-linked (GlcNAc...) asparagine glycosylation is present at Asn-141. A disulfide bridge connects residues Cys-182 and Cys-264. A mucin-like domain region spans residues 316–468 (ATPTPVTAIG…PPTRIRTTTS (153 aa)). O-linked (Man6P...) threonine glycosylation is found at Thr-317, Thr-319, and Thr-379. Disordered regions lie at residues 380–444 (PTLG…PVPR) and 458–480 (SPPT…QRPE). The span at 413–433 (PTAVATPPTPTTKNPRVSXPT) shows a compositional bias: low complexity. Residues 446–468 (TTKAPITRLETASPPTRIRTTTS) form an O-glycosylated at seven sites with GalNAc region. The Peptidase S72 domain occupies 585–694 (RAPARFTAKF…MSIAVTGSGS (110 aa)). N-linked (GlcNAc...) asparagine glycosylation is found at Asn-623, Asn-631, and Asn-643. A disulfide bridge connects residues Cys-651 and Cys-695. The segment covering 706-717 (PKRVPSEAPPTE) has biased composition (pro residues). The interval 706–727 (PKRVPSEAPPTEVPDRDPEKSS) is disordered. The span at 718–727 (VPDRDPEKSS) shows a compositional bias: basic and acidic residues. The chain crosses the membrane as a helical span at residues 732–757 (YLHTVIPAVVVAAILLIAGIIAMICY). A Nuclear localization signal motif is present at residues 758–764 (RKKRKGK). Thr-772 carries the phosphothreonine modification. Residues 801-877 (LQEEKAPLPP…YRSPPPYVPP (77 aa)) form a required for interaction with CAV3 region. Residues 805-877 (KAPLPPPEYP…YRSPPPYVPP (73 aa)) form a disordered region. Polar residues predominate over residues 814–828 (PNQSVPETTPLNQDT). A compositionally biased stretch (pro residues) spans 841–852 (NAPPYQPPPPFT). Positions 862–877 (PKNMTPYRSPPPYVPP) are required for binding DMD and UTRN. A PPXY motif motif is present at residues 871 to 874 (PPPY). Position 874 is a phosphotyrosine; by SRC (Tyr-874).

Monomer. Heterodimer of alpha- and beta-dystroglycan subunits which are the central components of the dystrophin-glycoprotein complex. This complex then can form a dystrophin-associated glycoprotein complex (DGC) which is composed of three subcomplexes: a cytoplasmic complex comprised of DMD (or UTRN), DTNA and a number of syntrophins, such as SNTB1, SNTB2, SNTG1 and SNTG2, the transmembrane dystroglycan complex, and the sarcoglycan-sarcospan complex. Interacts (via the N-terminal of alphaDAG1) with LARGE1; the interaction enhances laminin binding. Interacts with SGCD. Interacts with AGR2 and AGR3. Interacts (betaDAG1) with DMD; the interaction is inhibited by phosphorylation on the PPXY motif. Interacts (betaDAG1, via its PPXY motif) with UTRN (via its WWW and ZZ domains); the interaction is inhibited by phosphorylation on the PPXY motif. Interacts (betaDAG1, via its phosphorylated PPXY motif) with the SH2 domain-containing proteins, FYN, CSK, NCK and SHC. Interacts (betaDAG1) with CAV3 (via a central WW-like domain); the interaction disrupts the binding of DMD. BetaDAG1 directly interacts with ANK3, but not with ANK2; this interaction does not interfere with DMD-binding and is required for retention at costameres. Identified in a dystroglycan complex that contains at least PRX, DRP2, UTRN, DMD and DAG1. Interacts with POMGNT1. BetaDAG1 interacts with CD93. In terms of processing, O-glycosylated. POMGNT1 catalyzes the initial addition of N-acetylglucosamine, giving rise to the GlcNAc(beta1-2)Man(alpha1-)O-Ser/Thr moiety and thus providing the necessary basis for the addition of further carbohydrate moieties. Heavily O-glycosylated comprising of up to two thirds of its mass and the carbohydrate composition differs depending on tissue type. Mucin-type O-glycosylation is important for ligand binding activity. O-mannosylation of alpha-DAG1 is found in high abundance in both brain and muscle where the most abundant glycan is Sia-alpha-2-3-Gal-beta-1-4-Glc-NAc-beta-1-2-Man. In muscle, glycosylation on Thr-317, Thr-319 and Thr-379 by a phosphorylated O-mannosyl glycan with the structure 2-(N-acetylamido)-2-deoxygalactosyl-beta-1,3-2-(N-acetylamido)-2-deoxyglucosyl-beta-1,4-6-phosphomannose is mediated by like-acetylglucosaminyltransferase (LARGE1) protein amd is required for laminin binding. O-glycosylated in the N-terminal region with a core 1 or possibly core 8 glycan. The brain form displays a unique glycosylation pattern which is absent in other tissues; this form shows enhanced binding to laminin LAMA5 compared to the skeletal muscle form. N-glycosylated. Post-translationally, autolytic cleavage produces the alpha and beta subunits. In cutaneous cells, as well as in certain pathological conditions, shedding of beta-dystroglycan can occur releasing a peptide of about 30 kDa. In terms of processing, SRC-mediated phosphorylation of the PPXY motif of the beta subunit recruits SH2 domain-containing proteins, but inhibits binding to WWW domain-containing proteins, DMD and UTRN. This phosphorylation also inhibits nuclear entry.

The protein resides in the secreted. It localises to the extracellular space. It is found in the cell membrane. Its subcellular location is the cytoplasm. The protein localises to the cytoskeleton. The protein resides in the nucleus. It localises to the nucleoplasm. It is found in the sarcolemma. Its subcellular location is the postsynaptic cell membrane. In terms of biological role, the dystroglycan complex is involved in a number of processes including laminin and basement membrane assembly, sarcolemmal stability, cell survival, peripheral nerve myelination, nodal structure, cell migration, and epithelial polarization. Functionally, extracellular peripheral glycoprotein that acts as a receptor for extracellular matrix proteins containing laminin-G domains. Receptor for laminin-2 (LAMA2) and agrin in peripheral nerve Schwann cells. Also acts as a receptor for laminin LAMA5. Its function is as follows. Transmembrane protein that plays important roles in connecting the extracellular matrix to the cytoskeleton. Acts as a cell adhesion receptor in both muscle and non-muscle tissues. Receptor for both DMD and UTRN and, through these interactions, scaffolds axin to the cytoskeleton. Also functions in cell adhesion-mediated signaling and implicated in cell polarity. The polypeptide is Dystroglycan 1 (Sus scrofa (Pig)).